The primary structure comprises 345 residues: S-adenosylmethionine:tRNA ribosyltransferase-isomerase (345 aa).

It belongs to the QueA family. Monomer.

It is found in the cytoplasm. It catalyses the reaction 7-aminomethyl-7-carbaguanosine(34) in tRNA + S-adenosyl-L-methionine = epoxyqueuosine(34) in tRNA + adenine + L-methionine + 2 H(+). Its pathway is tRNA modification; tRNA-queuosine biosynthesis. Functionally, transfers and isomerizes the ribose moiety from AdoMet to the 7-aminomethyl group of 7-deazaguanine (preQ1-tRNA) to give epoxyqueuosine (oQ-tRNA). This chain is S-adenosylmethionine:tRNA ribosyltransferase-isomerase, found in Acidiphilium cryptum (strain JF-5).